Here is a 209-residue protein sequence, read N- to C-terminus: 3-hexulose-6-phosphate synthase (209 aa).

This sequence belongs to the HPS/KGPDC family. HPS subfamily. In terms of assembly, homodimer.

The enzyme catalyses D-ribulose 5-phosphate + formaldehyde = D-arabino-hex-3-ulose 6-phosphate. Its pathway is one-carbon metabolism; formaldehyde assimilation via RuMP pathway; D-fructose 6-phosphate from D-ribulose 5-phosphate and formaldehyde: step 1/2. In terms of biological role, catalyzes the condensation of ribulose 5-phosphate with formaldehyde to form 3-hexulose 6-phosphate. In Methylomonas aminofaciens, this protein is 3-hexulose-6-phosphate synthase (rmpA).